A 536-amino-acid polypeptide reads, in one-letter code: Ecdysone receptor (536 aa).

Residues 1–114 (MKTENLIVTT…GPVPRQQEEL (114 aa)) are modulating. The interval 77 to 107 (SPNSKLDDGNMSVHMGDGLDGKKSSSKKGPV) is disordered. 2 consecutive NR C4-type zinc fingers follow at residues 115 to 135 (CLVC…CEGC) and 151 to 175 (CKFG…LKKC). Positions 115-187 (CLVCGDRASG…VGMRPECVVP (73 aa)) form a DNA-binding region, nuclear receptor. The NR LBD domain occupies 278-514 (NQVAVIYKLI…FLEEVWDVGD (237 aa)).

Belongs to the nuclear hormone receptor family. NR1 subfamily.

The protein localises to the nucleus. Receptor for ecdysone. Binds to ecdysone response elements (ECRES). The chain is Ecdysone receptor (EcR) from Chironomus tentans (Midge).